Consider the following 100-residue polypeptide: Enhancer of yellow 2 transcription factor (100 aa).

This sequence belongs to the ENY2 family. Component of the nuclear pore complex (NPC)-associated AMEX complex (anchoring and mRNA export complex), composed of at least e(y)2 and xmas-2. Component of the SAGA transcription coactivator-HAT complexes, at least composed of Ada2b, e(y)2, Pcaf/Gcn5, Taf10 and Nipped-A/Trrap. Within the SAGA complex, e(y)2, Sgf11, and not/nonstop form an additional subcomplex of SAGA called the DUB module (deubiquitination module). Component of the THO complex, composed of at least e(y)2, HPR1, THO2, THOC5, THOC6 and THOC7. Interacts with e(y)1. Interacts with su(Hw) (via zinc fingers). Interacts with xmas-2; required for localization to the nuclear periphery. Interacts with the nuclear pore complex (NPC).

The protein resides in the nucleus. The protein localises to the nucleoplasm. Its subcellular location is the cytoplasm. Its function is as follows. Involved in mRNA export coupled transcription activation by association with both the AMEX and the SAGA complexes. The SAGA complex is a multiprotein complex that activates transcription by remodeling chromatin and mediating histone acetylation and deubiquitination. Within the SAGA complex, participates in a subcomplex that specifically deubiquitinates histone H2B. The SAGA complex is recruited to specific gene promoters by activators, where it is required for transcription. Required for nuclear receptor-mediated transactivation. Involved in transcription elongation by recruiting the THO complex onto nascent mRNA. The AMEX complex functions in docking export-competent ribonucleoprotein particles (mRNPs) to the nuclear entrance of the nuclear pore complex (nuclear basket). AMEX participates in mRNA export and accurate chromatin positioning in the nucleus by tethering genes to the nuclear periphery. This chain is Enhancer of yellow 2 transcription factor, found in Drosophila ananassae (Fruit fly).